The chain runs to 93 residues: uncharacterized protein (93 aa).

A disordered region spans residues 73–93; the sequence is KWTVSGPVKQDTGKTDPAEKN. Residues 83-93 are compositionally biased toward basic and acidic residues; it reads DTGKTDPAEKN.

This is an uncharacterized protein from Rhodobacter capsulatus (Rhodopseudomonas capsulata).